The sequence spans 123 residues: Large ribosomal subunit protein uL22c (123 aa).

It belongs to the universal ribosomal protein uL22 family. In terms of assembly, part of the 50S ribosomal subunit.

It localises to the plastid. The protein localises to the chloroplast. Its function is as follows. This protein binds specifically to 23S rRNA. In terms of biological role, the globular domain of the protein is located near the polypeptide exit tunnel on the outside of the subunit, while an extended beta-hairpin is found that lines the wall of the exit tunnel in the center of the 70S ribosome. In Chara vulgaris (Common stonewort), this protein is Large ribosomal subunit protein uL22c (rpl22).